The sequence spans 396 residues: Cystathionine beta-lyase (396 aa).

N6-(pyridoxal phosphate)lysine is present on Lys214.

It belongs to the trans-sulfuration enzymes family. In terms of assembly, homodimer. Pyridoxal 5'-phosphate serves as cofactor.

The protein resides in the cytoplasm. The catalysed reaction is L,L-cystathionine + H2O = L-homocysteine + pyruvate + NH4(+). It catalyses the reaction an S-substituted L-cysteine + H2O = a thiol + pyruvate + NH4(+). Its pathway is amino-acid biosynthesis; L-methionine biosynthesis via de novo pathway; L-homocysteine from L-cystathionine: step 1/1. Catalyzes the cleavage of cystathionine to homocysteine, pyruvate and ammonia during methionine biosynthesis. Also has cytotoxic activity toward osteogenic, osteosarcoma and tracheal cells, in vitro. The chemical basis for cell toxicity might be the formation and subsequent transfer of sulfane-sulfur to proteins, derived via beta-cystathionase cleavage of L-cystine. In Bordetella avium, this protein is Cystathionine beta-lyase (metC).